A 269-amino-acid chain; its full sequence is Shikimate dehydrogenase (NADP(+)) (269 aa).

Shikimate is bound by residues 17 to 19 (SKS) and threonine 64. The active-site Proton acceptor is the lysine 68. Aspartate 80 provides a ligand contact to NADP(+). Shikimate is bound by residues asparagine 89 and aspartate 105. Residues 130–134 (GAGGA), 154–159 (NRTRAK), and methionine 213 contribute to the NADP(+) site. Tyrosine 215 contacts shikimate. Residue glycine 237 coordinates NADP(+).

This sequence belongs to the shikimate dehydrogenase family. In terms of assembly, homodimer.

It carries out the reaction shikimate + NADP(+) = 3-dehydroshikimate + NADPH + H(+). It participates in metabolic intermediate biosynthesis; chorismate biosynthesis; chorismate from D-erythrose 4-phosphate and phosphoenolpyruvate: step 4/7. In terms of biological role, involved in the biosynthesis of the chorismate, which leads to the biosynthesis of aromatic amino acids. Catalyzes the reversible NADPH linked reduction of 3-dehydroshikimate (DHSA) to yield shikimate (SA). This chain is Shikimate dehydrogenase (NADP(+)), found in Neisseria gonorrhoeae (strain ATCC 700825 / FA 1090).